We begin with the raw amino-acid sequence, 101 residues long: uncharacterized protein (101 aa).

The first 24 residues, 1-24 (MILMFRMNKGMSFITLLFSLALFS), serve as a signal peptide directing secretion.

This is an uncharacterized protein from Haemophilus influenzae (strain ATCC 51907 / DSM 11121 / KW20 / Rd).